The following is a 683-amino-acid chain: Transforming growth factor-beta-induced protein ig-h3 (683 aa).

A signal peptide spans 1–23 (MALLMRLLTLALALSVGPAGTLA). At Ser-37 the chain carries Phosphoserine. In terms of domain architecture, EMI spans 45–99 (GPNVCAVQKVIGTNKKYFTNCKQWYQRKICGKSTVISYECCPGYEKVPGEKGCPA). 5 disulfide bridges follow: Cys-49–Cys-85, Cys-74–Cys-339, Cys-84–Cys-97, Cys-214–Cys-317, and Cys-473–Cys-478. Cys-65 is modified (S-cysteinyl cysteine). FAS1 domains lie at 103-236 (LSNL…DKVI), 240-371 (TNNI…DELL), 375-498 (SAKT…DRML), and 502-632 (MGTV…NTVL). The short motif at 642-644 (RGD) is the Cell attachment site element.

In terms of assembly, binds to type I, II, and IV collagens. Post-translationally, gamma-carboxylation is controversial. Gamma-carboxyglutamated; gamma-carboxyglutamate residues are formed by vitamin K dependent carboxylation; this may be required for calcium binding. According to a more recent report, does not contain vitamin K-dependent gamma-carboxyglutamate residues. The EMI domain contains 2 expected intradomain disulfide bridges (Cys-49-Cys85 and Cys-84-Cys-97) and one unusual interdomain disulfide bridge to the second FAS1 domain (Cys-74-Cys-339). This arrangement violates the predicted disulfide bridge pattern of an EMI domain. As to expression, expressed in heart, kidney, liver, skeletal muscle, testis, thyroid and uterus.

It is found in the secreted. The protein localises to the extracellular space. The protein resides in the extracellular matrix. Plays a role in cell adhesion. May play a role in cell-collagen interactions. The sequence is that of Transforming growth factor-beta-induced protein ig-h3 (Tgfbi) from Mus musculus (Mouse).